A 236-amino-acid polypeptide reads, in one-letter code: Phosphoribosylaminoimidazole-succinocarboxamide synthase (236 aa).

Belongs to the SAICAR synthetase family.

The enzyme catalyses 5-amino-1-(5-phospho-D-ribosyl)imidazole-4-carboxylate + L-aspartate + ATP = (2S)-2-[5-amino-1-(5-phospho-beta-D-ribosyl)imidazole-4-carboxamido]succinate + ADP + phosphate + 2 H(+). It participates in purine metabolism; IMP biosynthesis via de novo pathway; 5-amino-1-(5-phospho-D-ribosyl)imidazole-4-carboxamide from 5-amino-1-(5-phospho-D-ribosyl)imidazole-4-carboxylate: step 1/2. This is Phosphoribosylaminoimidazole-succinocarboxamide synthase from Pseudomonas syringae pv. tomato (strain ATCC BAA-871 / DC3000).